Consider the following 754-residue polypeptide: ATP-dependent RNA helicase DRS1 (754 aa).

Disordered stretches follow at residues 1–61 and 119–227; these read MVVG…NLDE and GLVK…GDEA. Positions 19-34 are enriched in acidic residues; sequence DSEDDVPILDSSDDEK. Residues 40–51 are compositionally biased toward basic residues; that stretch reads TTKKRKGKNNKK. Over residues 124-142 the composition is skewed to basic and acidic residues; the sequence is AHIDSKQEEETEKEKVEKE. Composition is skewed to acidic residues over residues 167 to 193 and 202 to 211; these read NQSEEEEEEEEEEEEEEEEEEEEQEEM and DEIDEEDDSE. A Phosphoserine modification is found at Ser-210. Positions 233–261 match the Q motif motif; the sequence is ENFNSLSLSRPVLKGLASLGYVKPSPIQS. In terms of domain architecture, Helicase ATP-binding spans 264-439; the sequence is IPIALLGKDI…SLSLKKPVRI (176 aa). Residue 277–284 participates in ATP binding; the sequence is AVTGSGKT. Positions 387-390 match the DEAD box motif; sequence DEAD. The region spanning 450–641 is the Helicase C-terminal domain; it reads KLTQEFVRIR…SMNDTIEDIL (192 aa). Residues 623-669 are a coiled coil; that stretch reads IEETNKLVESMNDTIEDILVEEKEEKEILRAEMQLRKGENMLKHKKE. The tract at residues 675–754 is disordered; sequence RRTWFQSESD…NKKKGFKSRR (80 aa). Over residues 696–707 the composition is skewed to basic residues; it reads RNKKVTNSKKRK. Residues 724–736 are compositionally biased toward basic and acidic residues; sequence TKTDRIADQERTF. A compositionally biased stretch (basic residues) spans 737 to 754; the sequence is KKQKSTNSNKKKGFKSRR.

This sequence belongs to the DEAD box helicase family. DDX27/DRS1 subfamily. As to quaternary structure, interacts with RRP1 and associates with pre-ribosomal particles.

It localises to the nucleus. The protein localises to the nucleolus. It carries out the reaction ATP + H2O = ADP + phosphate + H(+). Its function is as follows. ATP-binding RNA helicase involved in ribosome assembly. The chain is ATP-dependent RNA helicase DRS1 (DRS1) from Saccharomyces cerevisiae (strain YJM789) (Baker's yeast).